Here is a 264-residue protein sequence, read N- to C-terminus: MSKITTTNLLKMKQEGQRITAITAYDATFAKLFDDEGAHVLLIGDSLGMVLQGGQDTLGVSMDEMVYHTRCVVRGTTNALVVTDMPFMSYATPEQTYQNAARLMAAGARMVKMEGGDWLCDSIRHLTRNGVPVCGHLGLTPQSVHVFGGFKVQGRDEFQAQEIYRQALELQAAGIQLLVLECVPTSLAERISKALRIPVIGIGAGPATDGQILVMHDAFGITSGYVPKFTKNFLAETGDMRAAIRLYVKQVSEGTFPGPEHCFN.

The Mg(2+) site is built by aspartate 45 and aspartate 84. Residues aspartate 45 to serine 46, aspartate 84, and lysine 112 each bind 3-methyl-2-oxobutanoate. Glutamate 114 contributes to the Mg(2+) binding site. The active-site Proton acceptor is the glutamate 181.

It belongs to the PanB family. In terms of assembly, homodecamer; pentamer of dimers. Mg(2+) is required as a cofactor.

The protein resides in the cytoplasm. It carries out the reaction 3-methyl-2-oxobutanoate + (6R)-5,10-methylene-5,6,7,8-tetrahydrofolate + H2O = 2-dehydropantoate + (6S)-5,6,7,8-tetrahydrofolate. Its pathway is cofactor biosynthesis; (R)-pantothenate biosynthesis; (R)-pantoate from 3-methyl-2-oxobutanoate: step 1/2. In terms of biological role, catalyzes the reversible reaction in which hydroxymethyl group from 5,10-methylenetetrahydrofolate is transferred onto alpha-ketoisovalerate to form ketopantoate. In Aeromonas hydrophila subsp. hydrophila (strain ATCC 7966 / DSM 30187 / BCRC 13018 / CCUG 14551 / JCM 1027 / KCTC 2358 / NCIMB 9240 / NCTC 8049), this protein is 3-methyl-2-oxobutanoate hydroxymethyltransferase.